Here is a 432-residue protein sequence, read N- to C-terminus: Adenylosuccinate synthetase (432 aa).

Residues 13–19 (GDEGKGK) and 41–43 (GHT) contribute to the GTP site. Asp-14 acts as the Proton acceptor in catalysis. Asp-14 and Gly-41 together coordinate Mg(2+). Residues 14–17 (DEGK), 39–42 (NAGH), Thr-130, Arg-144, Gln-225, Thr-240, and Arg-304 each bind IMP. His-42 (proton donor) is an active-site residue. Position 300 to 306 (300 to 306 (ATTGRRR)) interacts with substrate. GTP is bound by residues Arg-306, 332–334 (KLD), and 415–417 (STG).

It belongs to the adenylosuccinate synthetase family. In terms of assembly, homodimer. The cofactor is Mg(2+).

It is found in the cytoplasm. It catalyses the reaction IMP + L-aspartate + GTP = N(6)-(1,2-dicarboxyethyl)-AMP + GDP + phosphate + 2 H(+). It functions in the pathway purine metabolism; AMP biosynthesis via de novo pathway; AMP from IMP: step 1/2. In terms of biological role, plays an important role in the de novo pathway of purine nucleotide biosynthesis. Catalyzes the first committed step in the biosynthesis of AMP from IMP. This is Adenylosuccinate synthetase from Salmonella paratyphi C (strain RKS4594).